A 223-amino-acid chain; its full sequence is Deoxyribose-phosphate aldolase (223 aa).

The active-site Proton donor/acceptor is the Asp-89. Lys-154 (schiff-base intermediate with acetaldehyde) is an active-site residue. Catalysis depends on Lys-183, which acts as the Proton donor/acceptor.

This sequence belongs to the DeoC/FbaB aldolase family. DeoC type 1 subfamily.

It is found in the cytoplasm. It catalyses the reaction 2-deoxy-D-ribose 5-phosphate = D-glyceraldehyde 3-phosphate + acetaldehyde. It participates in carbohydrate degradation; 2-deoxy-D-ribose 1-phosphate degradation; D-glyceraldehyde 3-phosphate and acetaldehyde from 2-deoxy-alpha-D-ribose 1-phosphate: step 2/2. In terms of biological role, catalyzes a reversible aldol reaction between acetaldehyde and D-glyceraldehyde 3-phosphate to generate 2-deoxy-D-ribose 5-phosphate. The polypeptide is Deoxyribose-phosphate aldolase (Thermoanaerobacter sp. (strain X514)).